The following is a 1056-amino-acid chain: ATP-dependent helicase wrn-1 (1056 aa).

Residues 1–102 (MISDDDDLPS…SSSDDSDQGD (102 aa)) are disordered. 2 repeat units span residues 17 to 26 (NEELPETEPE) and 28 to 37 (NDELPETEPE). Residues 17 to 37 (NEELPETEPEDNDELPETEPE) are 2 X 10 AA repeats of N-[ED]-E-L-P-E-T-E-P-E. The segment covering 19–38 (ELPETEPEDNDELPETEPES) has biased composition (acidic residues). The span at 43 to 53 (PTVTSNKTENQ) shows a compositional bias: polar residues. Positions 54 to 63 (VADEDYDSFD) are enriched in acidic residues. In terms of domain architecture, Helicase ATP-binding spans 236-406 (VRNVLGGKDQ…IANLRLRKPL (171 aa)). 249–256 (MSTGYGKS) provides a ligand contact to ATP. Residues 348–351 (DEAH) carry the DEAH box motif. The Helicase C-terminal domain occupies 427–583 (MAEDLGLFMK…NLTMMLRQLE (157 aa)). The Zn(2+) site is built by C591, C614, C615, and C618. Residues 749 to 771 (KEKAAPSTVPGASRSQSTKSSTE) form a disordered region. Polar residues predominate over residues 761-771 (SRSQSTKSSTE). The HRDC domain maps to 806 to 886 (PEKIDQLRSR…VQFSKETGIA (81 aa)). The interval 1018–1056 (QEKPDIQSMPSTSNPSTIKTVPSTPSSSLRAPPLKKFKL) is disordered. Over residues 1025-1046 (SMPSTSNPSTIKTVPSTPSSSL) the composition is skewed to polar residues.

Belongs to the helicase family. RecQ subfamily. Requires Zn(2+) as cofactor.

The protein localises to the nucleus. The enzyme catalyses Couples ATP hydrolysis with the unwinding of duplex DNA by translocating in the 3'-5' direction.. It carries out the reaction ATP + H2O = ADP + phosphate + H(+). Its function is as follows. Essential for the formation of DNA replication focal centers; stably associates with foci elements generating binding sites for RP-A. Exhibits a magnesium-dependent ATP-dependent 3'-5' DNA-helicase activity. May be involved in the control of genomic stability. The chain is ATP-dependent helicase wrn-1 (wrn-1) from Caenorhabditis elegans.